We begin with the raw amino-acid sequence, 581 residues long: Tricyclene synthase Oc15, chloroplastic (581 aa).

The N-terminal 68 residues, 1 to 68, are a transit peptide targeting the chloroplast; it reads MAFCISYVGA…ALCLNEHSLS (68 aa). Residues Asn-27, Asn-206, and Asn-319 are each glycosylated (N-linked (GlcNAc...) asparagine). Mg(2+) contacts are provided by Asp-338 and Asp-342. A DDXXD motif motif is present at residues 338–342; it reads DDIFD. Asn-384 and Asn-465 each carry an N-linked (GlcNAc...) asparagine glycan. The Mg(2+) site is built by Asn-482, Ser-486, and Glu-490. A glycan (N-linked (GlcNAc...) asparagine) is linked at Asn-509.

The protein belongs to the terpene synthase family. Tpsg subfamily. It depends on Mg(2+) as a cofactor. Requires Mn(2+) as cofactor. In terms of tissue distribution, accumulates in flowers; mostly expressed in both upper and lower petal lobes, and, to a lower extent, in tube and stamens.

It is found in the plastid. It localises to the chloroplast stroma. The catalysed reaction is (2E)-geranyl diphosphate = tricyclene + diphosphate. The enzyme catalyses (2E)-geranyl diphosphate = beta-myrcene + diphosphate. It participates in secondary metabolite biosynthesis; terpenoid biosynthesis. Functionally, contributes to floral scent emission. The sequence is that of Tricyclene synthase Oc15, chloroplastic (Oc15) from Antirrhinum majus (Garden snapdragon).